We begin with the raw amino-acid sequence, 115 residues long: UPF0738 protein SSP1780 (115 aa).

It belongs to the UPF0738 family.

The polypeptide is UPF0738 protein SSP1780 (Staphylococcus saprophyticus subsp. saprophyticus (strain ATCC 15305 / DSM 20229 / NCIMB 8711 / NCTC 7292 / S-41)).